Reading from the N-terminus, the 694-residue chain is Voltage-gated chloride channel TMC4 (694 aa).

Positions 1–21 are disordered; that stretch reads MEAWGQSPACSSSRKARTGPS. Residues 1–150 are Extracellular-facing; the sequence is MEAWGQSPAC…GTESYFSLLR (150 aa). Residues 151–171 traverse the membrane as a helical segment; it reads FLLFLNLVASVIEICMKLIPT. Topologically, residues 172–231 are cytoplasmic; the sequence is WLEGAPPGPPGPNISSPCGSYIPHTHGLVAFPTQLFNLLSGEGYLEWSPLFYGFYPPRSN. A helical membrane pass occupies residues 232-252; sequence LAITYLCSVFAISVIYLLCIL. Topologically, residues 253–330 are extracellular; sequence RRSVSGLKET…SQRAKVWSMR (78 aa). A helical membrane pass occupies residues 331-351; the sequence is ALLNVLVLALLGAAFYGIYWA. Over 352 to 376 the chain is Cytoplasmic; it reads TEYTLTLQETPLVRQTPLFKLLVDY. Residues 377–397 form a helical membrane-spanning segment; it reads LPSIFISLFNFVLPPVFKFIA. Residues 398-407 are Extracellular-facing; it reads SLEGYTQSRQ. The helical transmembrane segment at 408–428 threads the bilayer; that stretch reads IVLILLRTVFLRLASLVFLLV. At 429–465 the chain is on the cytoplasmic side; the sequence is SLWSQITCGGNMEAEGCKACGYNYKEIPCWETRLGQE. Residues 466 to 486 form a helical membrane-spanning segment; that stretch reads MYKLVLFDLLMGLLVTLLVQF. At 487–513 the chain is on the extracellular side; sequence PRKILCGLCPGALGRLSGTLEFQVPDE. The helical transmembrane segment at 514–534 threads the bilayer; the sequence is VLGLIYAQTVVWVGSFFCPLL. P535 is a topological domain (cytoplasmic). A helical membrane pass occupies residues 536-556; sequence LINTAKFLILFCLKKITLFSI. The Extracellular portion of the chain corresponds to 557 to 574; the sequence is YSPASRTFRASTANFFFP. A helical membrane pass occupies residues 575 to 595; the sequence is LVLLVGLAISAVPVLYSIFLI. The Cytoplasmic segment spans residues 596-635; sequence PPSKLCGPFRGKLSIWAQIPEAIESLPQTAQNFLYFLGTQ. Residues 636–656 form a helical membrane-spanning segment; sequence AFTVPLLILSSILMMYTVALA. The Extracellular portion of the chain corresponds to 657–694; it reads NCYGRLISELKRQIETEVQNKVFLAQRAVALSSRNGTS. N691 carries N-linked (GlcNAc...) asparagine glycosylation.

Belongs to the TMC family. As to expression, expressed in taste bud cells of the posterior tongue. Ubiquitously expressed.

It localises to the membrane. The enzyme catalyses chloride(in) = chloride(out). Its function is as follows. Voltage-gated chloride channel involved in high-concentration salt taste sensation. Depolarization induced by high NaCl concentration may trigger the activation of TMC4-mediated chloride influx into taste bud cells, helping the return to resting potential. Also allows permeation of organic anions including gluconate, but their current amplitudes at positive potentials are less than that of chloride. Involved in pH and temperature-dependent modulation of salty taste. The sequence is that of Voltage-gated chloride channel TMC4 from Mus musculus (Mouse).